The sequence spans 225 residues: 3-dehydroquinate dehydratase (225 aa).

3-dehydroquinate-binding positions include Ser6, 30 to 32 (EWR), and Arg62. The Proton donor/acceptor role is filled by His118. The Schiff-base intermediate with substrate role is filled by Lys143. Residues Arg186, Ser205, and Gln209 each contribute to the 3-dehydroquinate site.

This sequence belongs to the type-I 3-dehydroquinase family. In terms of assembly, homodimer.

It catalyses the reaction 3-dehydroquinate = 3-dehydroshikimate + H2O. It participates in metabolic intermediate biosynthesis; chorismate biosynthesis; chorismate from D-erythrose 4-phosphate and phosphoenolpyruvate: step 3/7. Involved in the third step of the chorismate pathway, which leads to the biosynthesis of aromatic amino acids. Catalyzes the cis-dehydration of 3-dehydroquinate (DHQ) and introduces the first double bond of the aromatic ring to yield 3-dehydroshikimate. In Streptococcus pneumoniae (strain ATCC 700669 / Spain 23F-1), this protein is 3-dehydroquinate dehydratase.